A 269-amino-acid chain; its full sequence is Gap junction gamma-3 protein (269 aa).

Topologically, residues 1–33 (MLLLELPIKCRMCGRFLRQLLAQESQHSTPVGR) are extracellular. Residues 34 to 54 (FLLPMLMGFRLLILVSSGPGV) form a helical membrane-spanning segment. Residues 55–86 (FGNDENEFICHLGQPGCKTICYDVFRPLSPLR) lie on the Cytoplasmic side of the membrane. A helical transmembrane segment spans residues 87–107 (FWAFQVILMAVPSAIYVAFTL). The Extracellular portion of the chain corresponds to 108-145 (YHVIGYWEVPGKENKEQETQISKGDHSKDVSGAKSLKL). Residues 146 to 166 (LWAYVAHLGVRLALEGAALGV) form a helical membrane-spanning segment. Over 167–205 (QYNLYGFKMSSTFICREDPCIGSTTCFQSHPSEKTIFLN) the chain is Cytoplasmic. A helical membrane pass occupies residues 206–226 (IMFGISGACFLFIFLELALLG). The Extracellular segment spans residues 227-269 (LGRFWRIYKHKLSFLKKLPTSESSVRSKDTTDELSVVEAKEPF). A Phosphoserine modification is found at serine 261.

It belongs to the connexin family. Gamma-type subfamily. As to quaternary structure, a connexon is composed of a hexamer of connexins. CNS specific. Expression is restricted to brain, spinal cord, and sciatic nerve.

Its subcellular location is the cell membrane. It is found in the cell junction. It localises to the gap junction. In terms of biological role, one gap junction consists of a cluster of closely packed pairs of transmembrane channels, the connexons, through which materials of low MW diffuse from one cell to a neighboring cell. The sequence is that of Gap junction gamma-3 protein (Gjc3) from Mus musculus (Mouse).